The chain runs to 459 residues: uncharacterized protein (459 aa).

Residues 7-65 form the TRAM domain; sequence PVNKNEIYTLTFEDLTHEGNGVAKIEGYPLFVPEVLPDEQAKVKVVKVNKNFGFGKLLE. Positions 78, 82, 85, and 164 each coordinate [4Fe-4S] cluster. S-adenosyl-L-methionine contacts are provided by glutamine 288, tyrosine 317, glutamate 338, and aspartate 386. The active-site Nucleophile is the cysteine 413.

It belongs to the class I-like SAM-binding methyltransferase superfamily. RNA M5U methyltransferase family.

This is an uncharacterized protein from Oceanobacillus iheyensis (strain DSM 14371 / CIP 107618 / JCM 11309 / KCTC 3954 / HTE831).